Reading from the N-terminus, the 713-residue chain is Acetyl-coenzyme A synthetase 1 (713 aa).

A disordered region spans residues 1-39 (MSPSAVQSSKLEEQSSEIDKLKAKMSQSAATAQQKKEHE). Positions 10-22 (KLEEQSSEIDKLK) are enriched in basic and acidic residues. Residues 248 to 251 (RGGK) and threonine 367 each bind CoA. Residues 443–445 (GEP), 467–472 (DTYWQT), aspartate 559, and arginine 574 each bind ATP. The FACS motif lies at 552-600 (PGYYFTGDGAAKDKDGYIWILGRVDDVVNVSGHRLSTAEIEAAIIEDPI). Serine 582 contacts CoA. Arginine 585 lines the ATP pocket. Residue arginine 650 participates in CoA binding. The Microbody targeting signal motif lies at 711–713 (VKL).

Belongs to the ATP-dependent AMP-binding enzyme family.

Its subcellular location is the microsome. The protein resides in the cytoplasm. It localises to the mitochondrion. The protein localises to the nucleus. It catalyses the reaction acetate + ATP + CoA = acetyl-CoA + AMP + diphosphate. In terms of biological role, catalyzes the production of acetyl-CoA. Provides the acetyl-CoA source for histone acetylation in the nucleus. 'Aerobic' isozyme of acetyl-coenzyme A synthetase, which supports growth on nonfermentable carbon sources such as glycerol and ethanol. May be required for assimilation of ethanol and acetate. The protein is Acetyl-coenzyme A synthetase 1 (ACS1) of Saccharomyces cerevisiae (strain ATCC 204508 / S288c) (Baker's yeast).